We begin with the raw amino-acid sequence, 234 residues long: Leucyl/phenylalanyl-tRNA--protein transferase (234 aa).

Belongs to the L/F-transferase family.

Its subcellular location is the cytoplasm. It carries out the reaction N-terminal L-lysyl-[protein] + L-leucyl-tRNA(Leu) = N-terminal L-leucyl-L-lysyl-[protein] + tRNA(Leu) + H(+). The catalysed reaction is N-terminal L-arginyl-[protein] + L-leucyl-tRNA(Leu) = N-terminal L-leucyl-L-arginyl-[protein] + tRNA(Leu) + H(+). The enzyme catalyses L-phenylalanyl-tRNA(Phe) + an N-terminal L-alpha-aminoacyl-[protein] = an N-terminal L-phenylalanyl-L-alpha-aminoacyl-[protein] + tRNA(Phe). Functions in the N-end rule pathway of protein degradation where it conjugates Leu, Phe and, less efficiently, Met from aminoacyl-tRNAs to the N-termini of proteins containing an N-terminal arginine or lysine. This is Leucyl/phenylalanyl-tRNA--protein transferase from Nitratidesulfovibrio vulgaris (strain ATCC 29579 / DSM 644 / CCUG 34227 / NCIMB 8303 / VKM B-1760 / Hildenborough) (Desulfovibrio vulgaris).